The primary structure comprises 87 residues: NADH dehydrogenase [ubiquinone] 1 alpha subcomplex subunit 4-like 2 (87 aa).

It belongs to the complex I NDUFA4 subunit family.

This Homo sapiens (Human) protein is NADH dehydrogenase [ubiquinone] 1 alpha subcomplex subunit 4-like 2 (NDUFA4L2).